We begin with the raw amino-acid sequence, 364 residues long: Uroporphyrinogen decarboxylase (364 aa).

Substrate is bound by residues 28-32 (RQAGR), D78, Y160, T215, and H333.

It belongs to the uroporphyrinogen decarboxylase family. In terms of assembly, homodimer.

It is found in the cytoplasm. It carries out the reaction uroporphyrinogen III + 4 H(+) = coproporphyrinogen III + 4 CO2. The protein operates within porphyrin-containing compound metabolism; protoporphyrin-IX biosynthesis; coproporphyrinogen-III from 5-aminolevulinate: step 4/4. Functionally, catalyzes the decarboxylation of four acetate groups of uroporphyrinogen-III to yield coproporphyrinogen-III. The sequence is that of Uroporphyrinogen decarboxylase from Burkholderia cenocepacia (strain ATCC BAA-245 / DSM 16553 / LMG 16656 / NCTC 13227 / J2315 / CF5610) (Burkholderia cepacia (strain J2315)).